Here is a 328-residue protein sequence, read N- to C-terminus: Telomere-binding protein cav (328 aa).

Residues 107-320 are required for binding to Su(var)205; sequence RRKMVQPYPE…NISLQNSGSE (214 aa). A disordered region spans residues 139–228; that stretch reads DRWQKQKSQN…EFQTEHTDCP (90 aa). Composition is skewed to polar residues over residues 144–167 and 180–189; these read QKSQ…QQDS and ANTNRYSVSQ. 2 short sequence motifs (su(var)205-binding Pro-containing repeat) span residues 228–232 and 281–287; these read PETQM and PETETNE. The segment covering 295–319 has biased composition (polar residues); it reads INSESMSIGPSIDSEGNISLQNSGS. The tract at residues 295–328 is disordered; the sequence is INSESMSIGPSIDSEGNISLQNSGSEPIDVDSMA.

In terms of assembly, interacts (via C-terminus) with Su(var)205 dimer (via hinge and chromoshadow domain) and with moi to form the terminin, telomere-capping, complex. Interacts with HP6, which is also part of the terminin complex.

It is found in the nucleus. It localises to the chromosome. Its subcellular location is the telomere. In terms of biological role, binds to chromosome ends in a sequence-dependent manner and is required for telomere capping. In Drosophila erecta (Fruit fly), this protein is Telomere-binding protein cav.